The sequence spans 557 residues: CTP synthase (557 aa).

The segment at 1–267 is amidoligase domain; sequence MAKYIFVTGG…GAYLTQRLGL (267 aa). CTP is bound at residue S13. S13 is a UTP binding site. 14-19 serves as a coordination point for ATP; it reads SVGKGI. Y54 contacts L-glutamine. Residue D71 coordinates ATP. D71 and E141 together coordinate Mg(2+). CTP-binding positions include 148–150, 188–193, and K224; these read DIE and KTKPTQ. UTP-binding positions include 188–193 and K224; that span reads KTKPTQ. The Glutamine amidotransferase type-1 domain occupies 292–535; that stretch reads AIALVGKYVE…VAAAAKTFRE (244 aa). G354 lines the L-glutamine pocket. C381 acts as the Nucleophile; for glutamine hydrolysis in catalysis. L-glutamine is bound by residues 382–385, E406, and R463; that span reads LGMQ. Active-site residues include H508 and E510. The tract at residues 536–557 is disordered; it reads GDQRPLPLEQNGAVTEHEPHSR.

This sequence belongs to the CTP synthase family. In terms of assembly, homotetramer.

The catalysed reaction is UTP + L-glutamine + ATP + H2O = CTP + L-glutamate + ADP + phosphate + 2 H(+). The enzyme catalyses L-glutamine + H2O = L-glutamate + NH4(+). It catalyses the reaction UTP + NH4(+) + ATP = CTP + ADP + phosphate + 2 H(+). It functions in the pathway pyrimidine metabolism; CTP biosynthesis via de novo pathway; CTP from UDP: step 2/2. Allosterically activated by GTP, when glutamine is the substrate; GTP has no effect on the reaction when ammonia is the substrate. The allosteric effector GTP functions by stabilizing the protein conformation that binds the tetrahedral intermediate(s) formed during glutamine hydrolysis. Inhibited by the product CTP, via allosteric rather than competitive inhibition. Its function is as follows. Catalyzes the ATP-dependent amination of UTP to CTP with either L-glutamine or ammonia as the source of nitrogen. Regulates intracellular CTP levels through interactions with the four ribonucleotide triphosphates. This is CTP synthase from Roseiflexus sp. (strain RS-1).